Here is a 447-residue protein sequence, read N- to C-terminus: uncharacterized protein (447 aa).

The next 2 membrane-spanning stretches (helical) occupy residues V380–T400 and I412–V432.

The protein resides in the cell membrane. This is an uncharacterized protein from Methanocaldococcus jannaschii (strain ATCC 43067 / DSM 2661 / JAL-1 / JCM 10045 / NBRC 100440) (Methanococcus jannaschii).